The primary structure comprises 339 residues: Phenylalanine--tRNA ligase alpha subunit (339 aa).

Position 254 (glutamate 254) interacts with Mg(2+).

It belongs to the class-II aminoacyl-tRNA synthetase family. Phe-tRNA synthetase alpha subunit type 1 subfamily. Tetramer of two alpha and two beta subunits. Requires Mg(2+) as cofactor.

It localises to the cytoplasm. It catalyses the reaction tRNA(Phe) + L-phenylalanine + ATP = L-phenylalanyl-tRNA(Phe) + AMP + diphosphate + H(+). In Clostridium acetobutylicum (strain ATCC 824 / DSM 792 / JCM 1419 / IAM 19013 / LMG 5710 / NBRC 13948 / NRRL B-527 / VKM B-1787 / 2291 / W), this protein is Phenylalanine--tRNA ligase alpha subunit.